Here is a 335-residue protein sequence, read N- to C-terminus: Methionine import ATP-binding protein MetN 2 (335 aa).

The ABC transporter domain occupies 2–242 (IEFHNVHKTY…PQHSTTKRFV (241 aa)). 38–45 (GHSGAGKS) serves as a coordination point for ATP.

Belongs to the ABC transporter superfamily. Methionine importer (TC 3.A.1.24) family. As to quaternary structure, the complex is composed of two ATP-binding proteins (MetN), two transmembrane proteins (MetI) and a solute-binding protein (MetQ).

The protein resides in the cell inner membrane. It carries out the reaction L-methionine(out) + ATP + H2O = L-methionine(in) + ADP + phosphate + H(+). It catalyses the reaction D-methionine(out) + ATP + H2O = D-methionine(in) + ADP + phosphate + H(+). Part of the ABC transporter complex MetNIQ involved in methionine import. Responsible for energy coupling to the transport system. This chain is Methionine import ATP-binding protein MetN 2, found in Pseudomonas syringae pv. tomato (strain ATCC BAA-871 / DC3000).